The following is a 493-amino-acid chain: Galactose-1-phosphate uridylyltransferase (493 aa).

The protein belongs to the galactose-1-phosphate uridylyltransferase type 2 family.

It is found in the cytoplasm. The enzyme catalyses alpha-D-galactose 1-phosphate + UDP-alpha-D-glucose = alpha-D-glucose 1-phosphate + UDP-alpha-D-galactose. It participates in carbohydrate metabolism; galactose metabolism. In Lactococcus lactis subsp. cremoris (strain SK11), this protein is Galactose-1-phosphate uridylyltransferase.